A 161-amino-acid polypeptide reads, in one-letter code: Nucleotide-binding protein Rpic_2826 (161 aa).

It belongs to the YajQ family.

Functionally, nucleotide-binding protein. The polypeptide is Nucleotide-binding protein Rpic_2826 (Ralstonia pickettii (strain 12J)).